A 493-amino-acid chain; its full sequence is Kelch-like protein 42 (493 aa).

One can recognise a BTB domain in the interval 5-77 (EMVQIRLEDR…INAGGAREGW (73 aa)). 6 Kelch repeats span residues 183–241 (VLVA…ILDN), 242–289 (YLFI…AVNS), 291–332 (LYAI…ECKG), 334–379 (IYVI…SVEE), 381–436 (IYIV…ALHN), and 438–487 (GIYI…SLYL).

Component of the BCR(KLHL42) E3 ubiquitin ligase complex, at least composed of CUL3 and KLHL42. Interacts (via the BTB domain) with CUL3. Interacts (via the kelch domains) with KATNA1.

It localises to the cytoplasm. The protein resides in the cytoskeleton. The protein localises to the spindle. Its pathway is protein modification; protein ubiquitination. Functionally, substrate-specific adapter of a BCR (BTB-CUL3-RBX1) E3 ubiquitin-protein ligase complex required for mitotic progression and cytokinesis. The BCR(KLHL42) E3 ubiquitin ligase complex mediates the ubiquitination and subsequent degradation of KATNA1. Involved in microtubule dynamics throughout mitosis. This chain is Kelch-like protein 42 (Klhl42), found in Mus musculus (Mouse).